Reading from the N-terminus, the 268-residue chain is Taurine import ATP-binding protein TauB (268 aa).

The ABC transporter domain occupies 4-236; the sequence is LSINNLSMRF…LGVDSDLREV (233 aa). Residue 41–48 coordinates ATP; it reads GPSGCGKT.

Belongs to the ABC transporter superfamily. Taurine importer (TC 3.A.1.17.1) family. As to quaternary structure, the complex is composed of two ATP-binding proteins (TauB), two transmembrane proteins (TauC) and a solute-binding protein (TauA).

The protein resides in the cell inner membrane. The enzyme catalyses taurine(out) + ATP + H2O = taurine(in) + ADP + phosphate + H(+). Part of the ABC transporter complex TauABC involved in taurine import. Responsible for energy coupling to the transport system. The protein is Taurine import ATP-binding protein TauB of Roseobacter denitrificans (strain ATCC 33942 / OCh 114) (Erythrobacter sp. (strain OCh 114)).